Consider the following 545-residue polypeptide: CTP synthase (545 aa).

Residues 1 to 265 (MTKYIFITGG…DEIVVKKLSL (265 aa)) are amidoligase domain. S13 contacts CTP. UTP is bound at residue S13. Residues 14–19 (SLGKGI) and D71 contribute to the ATP site. Positions 71 and 139 each coordinate Mg(2+). CTP is bound by residues 146-148 (DIE), 186-191 (KTKPTQ), and K222. UTP is bound by residues 186-191 (KTKPTQ) and K222. The Glutamine amidotransferase type-1 domain occupies 290-541 (KIAMVGKYTE…VLAARIHHQE (252 aa)). G351 provides a ligand contact to L-glutamine. The active-site Nucleophile; for glutamine hydrolysis is the C378. Residues 379 to 382 (LGMQ), E402, and R469 contribute to the L-glutamine site. Residues H514 and E516 contribute to the active site.

This sequence belongs to the CTP synthase family. As to quaternary structure, homotetramer.

It catalyses the reaction UTP + L-glutamine + ATP + H2O = CTP + L-glutamate + ADP + phosphate + 2 H(+). The enzyme catalyses L-glutamine + H2O = L-glutamate + NH4(+). The catalysed reaction is UTP + NH4(+) + ATP = CTP + ADP + phosphate + 2 H(+). The protein operates within pyrimidine metabolism; CTP biosynthesis via de novo pathway; CTP from UDP: step 2/2. Its activity is regulated as follows. Allosterically activated by GTP, when glutamine is the substrate; GTP has no effect on the reaction when ammonia is the substrate. The allosteric effector GTP functions by stabilizing the protein conformation that binds the tetrahedral intermediate(s) formed during glutamine hydrolysis. Inhibited by the product CTP, via allosteric rather than competitive inhibition. In terms of biological role, catalyzes the ATP-dependent amination of UTP to CTP with either L-glutamine or ammonia as the source of nitrogen. Regulates intracellular CTP levels through interactions with the four ribonucleotide triphosphates. The sequence is that of CTP synthase from Legionella pneumophila (strain Corby).